The following is a 594-amino-acid chain: Aspartate--tRNA(Asp/Asn) ligase (594 aa).

Glu175 contributes to the L-aspartate binding site. Residues 199–202 are aspartate; that stretch reads QQFK. L-aspartate-binding residues include Arg221 and His455. 221–223 serves as a coordination point for ATP; it reads RDE. Glu489 is an ATP binding site. Position 496 (Arg496) interacts with L-aspartate. Residue 541–544 coordinates ATP; that stretch reads GIDR.

Belongs to the class-II aminoacyl-tRNA synthetase family. Type 1 subfamily. As to quaternary structure, homodimer.

The protein localises to the cytoplasm. The catalysed reaction is tRNA(Asx) + L-aspartate + ATP = L-aspartyl-tRNA(Asx) + AMP + diphosphate. Functionally, aspartyl-tRNA synthetase with relaxed tRNA specificity since it is able to aspartylate not only its cognate tRNA(Asp) but also tRNA(Asn). Reaction proceeds in two steps: L-aspartate is first activated by ATP to form Asp-AMP and then transferred to the acceptor end of tRNA(Asp/Asn). This Pelagibacter ubique (strain HTCC1062) protein is Aspartate--tRNA(Asp/Asn) ligase.